A 383-amino-acid chain; its full sequence is MTPTTETTVGIGGAAESTDMVLNIGPQHPSTHGVLRLKLVLDGERITSAEPVIGYMHRGAEKLFEARDYRQIIMLANRHDWLSAFSNELGVVLAVERMLGMEVPTRAVWTRTLLAELNRVLNHLMFLGSYPLELGGITPVFYAFREREVLQNVMEEVSGGRMHYMFNRVGGLKEDLPAGWTTRARGAVAAVRSRMDVFDDLVLGNEIFRGRTRGVGALSAEAVHAYGVSGPVARASGVDFDLRRDEPYLAYGELQDTLKVVTRTDGDCLARFECLLAQTHNALDLADACLDRLAELAPGPVNQRLPKVLKAPEGHTYAWTENPLGINGYYLVSKGEKTPYRLKLRSASYNNIQALAELLPGTLVADMVAILGSLFFVVGDIDK.

This sequence belongs to the complex I 49 kDa subunit family. NDH-1 is composed of 14 different subunits. Subunits NuoB, C, D, E, F, and G constitute the peripheral sector of the complex.

It localises to the cell membrane. It carries out the reaction a quinone + NADH + 5 H(+)(in) = a quinol + NAD(+) + 4 H(+)(out). NDH-1 shuttles electrons from NADH, via FMN and iron-sulfur (Fe-S) centers, to quinones in the respiratory chain. The immediate electron acceptor for the enzyme in this species is believed to be a menaquinone. Couples the redox reaction to proton translocation (for every two electrons transferred, four hydrogen ions are translocated across the cytoplasmic membrane), and thus conserves the redox energy in a proton gradient. The polypeptide is NADH-quinone oxidoreductase subunit D 1 (Streptomyces coelicolor (strain ATCC BAA-471 / A3(2) / M145)).